Here is a 332-residue protein sequence, read N- to C-terminus: Opticin (332 aa).

An N-terminal signal peptide occupies residues 1 to 19; that stretch reads MRLLAFLSLLALVLQETGT. The tract at residues 21–41 is disordered; sequence SLPRKERKRREEQMPREGDSF. Over residues 29–39 the composition is skewed to basic and acidic residues; it reads RREEQMPREGD. Sulfotyrosine is present on residues tyrosine 65 and tyrosine 71. Positions 86-106 are disordered; the sequence is ATSISPAKSTTAPGTPSSNPT. An LRRNT domain is found at 116-153; it reads LLSSQPNHGLPTCLVCVCLGSSVYCDDIDLEDIPPLPR. Residue tyrosine 139 is modified to Sulfotyrosine. LRR repeat units follow at residues 154–175, 178–199, 202–223, 248–269, 270–290, and 300–320; these read RTAY…DFKG, KLKR…AFRL, ALQD…PSGI, KLQF…LPLS, LRSV…VFCD, and QLED…PSAY. Cysteine 289 and cysteine 322 form a disulfide bridge. The N-linked (GlcNAc...) asparagine glycan is linked to asparagine 312.

Belongs to the small leucine-rich proteoglycan (SLRP) family. SLRP class III subfamily. In terms of assembly, homodimer. Post-translationally, O-glycosylated. In terms of processing, proteolytically cleaved by MMP1, MMP2, MMP3, MMP7, MMP8, MMP9, ADAMTS4, and ADAMTS5. Proteolytically cleaved by MMP13. The degradation of OPTC by proteases may contribute to osteoarthritis pathophysiology. Sulfated on tyrosine residues. Expressed in cartilage and synovial membranes (at protein level). Expressed in the retina, iris, ligament, skin and fetal liver (at protein level). Expressed in the retinal pigment epithelium (at protein level). Expressed in synovial fibroblasts and subchondral bone osteoblasts.

Its subcellular location is the secreted. The protein resides in the extracellular space. It is found in the extracellular matrix. In terms of biological role, inhibits angiogenesis in the vitreous humor of the eye, and therefore represses neovascularization. Binds collagen fibrils. May be involved in collagen fiber organization via regulation of other members of the small leucine-rich repeat proteoglycan superfamily. The sequence is that of Opticin (OPTC) from Homo sapiens (Human).